The chain runs to 639 residues: Serine protease HtrA-like (639 aa).

Composition is skewed to basic and acidic residues over residues M1–Q13, Y21–Q75, Q106–S187, and K195–K205. A disordered region spans residues M1–T262. Over residues A206–Y219 the composition is skewed to polar residues. Basic and acidic residues-rich tracts occupy residues T220–K235 and N245–T262. A helical transmembrane segment spans residues I277 to M297. Residues H374, D404, and S489 each act as charge relay system in the active site. The PDZ domain occupies E527 to G629.

It belongs to the peptidase S1C family.

It localises to the cell membrane. The protein is Serine protease HtrA-like of Staphylococcus haemolyticus (strain JCSC1435).